Reading from the N-terminus, the 24-residue chain is Aldehyde dehydrogenase gamma chain (24 aa).

Heterotrimer composed of an alpha, a beta and a gamma chain. [2Fe-2S] cluster is required as a cofactor.

The enzyme catalyses an aldehyde + a quinone + H2O = a quinol + a carboxylate + H(+). This Comamonas testosteroni (Pseudomonas testosteroni) protein is Aldehyde dehydrogenase gamma chain.